Reading from the N-terminus, the 494-residue chain is UPF0371 protein SPJ_0333 (494 aa).

Belongs to the UPF0371 family.

This chain is UPF0371 protein SPJ_0333, found in Streptococcus pneumoniae (strain JJA).